The sequence spans 236 residues: MKNKNRLNTIKLLSISLLIAVTTACSNTVELSKALPNDPDFAPIMPEEEEERIVPSGSLFKPHYVNNIYSDSKAHRVGDIISVILSEKTQAKKNAKTELKKANETNLDAVTGLGGVPVSINGESLQFGISQDSNFKGDAKADQGNSLSGNISVHVLRVLPNGNLMIRGEKWLTLNNGDEYIRLTGVIRSKDINSNNTILSNKVANARIQYAGTGSFADSNEQGWLVKFFNSTWWPF.

Residues 1 to 24 (MKNKNRLNTIKLLSISLLIAVTTA) form the signal peptide. The N-palmitoyl cysteine moiety is linked to residue Cys25. A lipid anchor (S-diacylglycerol cysteine) is attached at Cys25.

The protein belongs to the FlgH family. The basal body constitutes a major portion of the flagellar organelle and consists of four rings (L,P,S, and M) mounted on a central rod.

It is found in the cell outer membrane. The protein resides in the bacterial flagellum basal body. Its function is as follows. Assembles around the rod to form the L-ring and probably protects the motor/basal body from shearing forces during rotation. This Colwellia psychrerythraea (strain 34H / ATCC BAA-681) (Vibrio psychroerythus) protein is Flagellar L-ring protein.